The chain runs to 271 residues: Chymotrypsin-like elastase family member 2A (271 aa).

An N-terminal signal peptide occupies residues 1–16 (MIRTLLLSALVAGALS). Residues 17–30 (CGYPTYEVQHDVSR) constitute a propeptide, activation peptide. Positions 31–269 (VVGGQEASPN…YIDWINSVIA (239 aa)) constitute a Peptidase S1 domain. A disulfide bridge connects residues C60 and C76. Residues H75 and D123 each act as charge relay system in the active site. Disulfide bonds link C157–C224, C188–C204, and C214–C245. S218 functions as the Charge relay system in the catalytic mechanism.

This sequence belongs to the peptidase S1 family. Elastase subfamily. As to quaternary structure, interacts with CPA1. Interacts with SERPINA1. Pancreas.

The protein resides in the secreted. The enzyme catalyses Preferential cleavage: Leu-|-Xaa, Met-|-Xaa and Phe-|-Xaa. Hydrolyzes elastin.. Functionally, elastase that enhances insulin signaling and might have a physiologic role in cellular glucose metabolism. Circulates in plasma and reduces platelet hyperactivation, triggers both insulin secretion and degradation, and increases insulin sensitivity. The polypeptide is Chymotrypsin-like elastase family member 2A (Cela2a) (Rattus norvegicus (Rat)).